The primary structure comprises 411 residues: Proteasome-activating nucleotidase 2 (411 aa).

Residues 35–75 (IVAVNGELQAQLDDVEARREELREEVNRLQRENETLKTASL) adopt a coiled-coil conformation. Residues 196–201 (GTGKTM) and His335 contribute to the ATP site. Residues 408-411 (SYIQ) form a docks into pockets in the proteasome alpha-ring to cause gate opening region.

This sequence belongs to the AAA ATPase family. Homohexamer. The hexameric complex has a two-ring architecture resembling a top hat that caps the 20S proteasome core at one or both ends. Upon ATP-binding, the C-terminus of PAN interacts with the alpha-rings of the proteasome core by binding to the intersubunit pockets.

The protein resides in the cytoplasm. In terms of biological role, ATPase which is responsible for recognizing, binding, unfolding and translocation of substrate proteins into the archaeal 20S proteasome core particle. Is essential for opening the gate of the 20S proteasome via an interaction with its C-terminus, thereby allowing substrate entry and access to the site of proteolysis. Thus, the C-termini of the proteasomal ATPase function like a 'key in a lock' to induce gate opening and therefore regulate proteolysis. Unfolding activity requires energy from ATP hydrolysis, whereas ATP binding alone promotes ATPase-20S proteasome association which triggers gate opening, and supports translocation of unfolded substrates. The sequence is that of Proteasome-activating nucleotidase 2 from Halobacterium salinarum (strain ATCC 700922 / JCM 11081 / NRC-1) (Halobacterium halobium).